Reading from the N-terminus, the 240-residue chain is Probable transcriptional regulatory protein HPAG1_0159 (240 aa).

Belongs to the TACO1 family.

It is found in the cytoplasm. This is Probable transcriptional regulatory protein HPAG1_0159 from Helicobacter pylori (strain HPAG1).